Here is a 455-residue protein sequence, read N- to C-terminus: Bifunctional protein GlmU (455 aa).

The tract at residues 1-227 is pyrophosphorylase; it reads MGLSVIILAA…CEEVQGVNDR (227 aa). UDP-N-acetyl-alpha-D-glucosamine is bound by residues 8-11, Lys-22, Gln-73, 78-79, 100-102, Gly-137, Glu-152, Asn-167, and Asn-225; these read LAAG, GT, and YGD. A Mg(2+)-binding site is contributed by Asp-102. Position 225 (Asn-225) interacts with Mg(2+). Residues 228–248 are linker; the sequence is WELTKLERYYQRLMAKKLSLA. An N-acetyltransferase region spans residues 249–455; that stretch reads GVTIIDPERF…KGWHRPTKKE (207 aa). Arg-332 and Lys-350 together coordinate UDP-N-acetyl-alpha-D-glucosamine. Catalysis depends on His-362, which acts as the Proton acceptor. UDP-N-acetyl-alpha-D-glucosamine is bound by residues Tyr-365 and Asn-376. Residues Ala-379, 385–386, Ser-404, Ala-422, and Arg-439 each bind acetyl-CoA; that span reads NY.

This sequence in the N-terminal section; belongs to the N-acetylglucosamine-1-phosphate uridyltransferase family. The protein in the C-terminal section; belongs to the transferase hexapeptide repeat family. In terms of assembly, homotrimer. Mg(2+) serves as cofactor.

It is found in the cytoplasm. It carries out the reaction alpha-D-glucosamine 1-phosphate + acetyl-CoA = N-acetyl-alpha-D-glucosamine 1-phosphate + CoA + H(+). It catalyses the reaction N-acetyl-alpha-D-glucosamine 1-phosphate + UTP + H(+) = UDP-N-acetyl-alpha-D-glucosamine + diphosphate. Its pathway is nucleotide-sugar biosynthesis; UDP-N-acetyl-alpha-D-glucosamine biosynthesis; N-acetyl-alpha-D-glucosamine 1-phosphate from alpha-D-glucosamine 6-phosphate (route II): step 2/2. It functions in the pathway nucleotide-sugar biosynthesis; UDP-N-acetyl-alpha-D-glucosamine biosynthesis; UDP-N-acetyl-alpha-D-glucosamine from N-acetyl-alpha-D-glucosamine 1-phosphate: step 1/1. It participates in bacterial outer membrane biogenesis; LPS lipid A biosynthesis. Catalyzes the last two sequential reactions in the de novo biosynthetic pathway for UDP-N-acetylglucosamine (UDP-GlcNAc). The C-terminal domain catalyzes the transfer of acetyl group from acetyl coenzyme A to glucosamine-1-phosphate (GlcN-1-P) to produce N-acetylglucosamine-1-phosphate (GlcNAc-1-P), which is converted into UDP-GlcNAc by the transfer of uridine 5-monophosphate (from uridine 5-triphosphate), a reaction catalyzed by the N-terminal domain. This chain is Bifunctional protein GlmU, found in Coxiella burnetii (strain CbuG_Q212) (Coxiella burnetii (strain Q212)).